We begin with the raw amino-acid sequence, 356 residues long: D-alanine--D-alanine ligase (356 aa).

The ATP-grasp domain occupies 134-339 (KQLFEHRGLP…YPELITKLIE (206 aa)). 167–222 (NDKLNYPVFVKPANLGSSVGISKCNNEAELKEGIKEAFQFDRKLVIEQGVNAREIE) is an ATP binding site. Asp-293, Glu-306, and Asn-308 together coordinate Mg(2+).

The protein belongs to the D-alanine--D-alanine ligase family. The cofactor is Mg(2+). Requires Mn(2+) as cofactor.

The protein resides in the cytoplasm. The catalysed reaction is 2 D-alanine + ATP = D-alanyl-D-alanine + ADP + phosphate + H(+). It participates in cell wall biogenesis; peptidoglycan biosynthesis. In terms of biological role, cell wall formation. This chain is D-alanine--D-alanine ligase, found in Staphylococcus aureus (strain MSSA476).